The primary structure comprises 676 residues: RNA helicase NPH-II (676 aa).

One can recognise a Helicase ATP-binding domain in the interval 172–347 (FSAWISHRPV…VFLPNPAFIH (176 aa)). ATP is bound at residue 185-192 (GGTGVGKT). The DEXH box signature appears at 296-299 (DEVH). In terms of domain architecture, Helicase C-terminal spans 366 to 542 (NPSSRMAYIE…KFNLTLPEDL (177 aa)).

The protein belongs to the DEAD box helicase family. DEAH subfamily. As to quaternary structure, monomer.

Its subcellular location is the virion. The enzyme catalyses ATP + H2O = ADP + phosphate + H(+). In terms of biological role, NTP-dependent helicase that catalyzes unidirectional unwinding of 3'tailed duplex RNAs and plays an important role during transcription of early mRNAs, presumably by preventing R-loop formation behind the elongating RNA polymerase. Might also play a role in the export of newly synthesized mRNA chains out of the core into the cytoplasm. Required for replication and propagation of viral particles. The protein is RNA helicase NPH-II (OPG084) of Homo sapiens (Human).